The chain runs to 187 residues: Frataxin, mitochondrial (187 aa).

This sequence belongs to the frataxin family. Monomer. Oligomer. Interacts with NIFS1.

The protein localises to the mitochondrion. The enzyme catalyses 4 Fe(2+) + O2 + 4 H(+) = 4 Fe(3+) + 2 H2O. In terms of biological role, promotes the biosynthesis of heme as well as the assembly and repair of iron-sulfur clusters by delivering Fe(2+) to proteins involved in these pathways. May play a role in the protection against iron-catalyzed oxidative stress through its ability to catalyze the oxidation of Fe(2+) to Fe(3+). May be able to store large amounts of the metal in the form of a ferrihydrite mineral by oligomerization. Binds to the mitochondrial cysteine desulfurase NIFS1 and increases its activity. The sequence is that of Frataxin, mitochondrial (FH) from Arabidopsis thaliana (Mouse-ear cress).